The primary structure comprises 611 residues: Elongation factor 1 alpha-like protein (611 aa).

2 disordered regions span residues 1-21 (MAYS…DEGE) and 105-138 (SISQ…DEKT). The residue at position 124 (Ser124) is a Phosphoserine. The span at 126 to 138 (GERNGEEANDEKT) shows a compositional bias: basic and acidic residues. The tr-type G domain occupies 165-390 (LPHLSFVVLG…LENAAFKISK (226 aa)). The interval 174–181 (GHVDAGKS) is G1. A GTP-binding site is contributed by 174-181 (GHVDAGKS). Positions 230–234 (GVTVS) are G2. The tract at residues 251 to 254 (DAPG) is G3. Residues 313–316 (NKMD) and 352–354 (SGF) contribute to the GTP site. The tract at residues 313-316 (NKMD) is G4. Residues 352–354 (SGF) are G5.

It belongs to the TRAFAC class translation factor GTPase superfamily. Classic translation factor GTPase family. In terms of assembly, component of the Dom34-Hbs1 complex, also named Pelota-HBS1L complex, composed of DOM34 and HBS1.

Its subcellular location is the cytoplasm. It catalyses the reaction GTP + H2O = GDP + phosphate + H(+). Its function is as follows. GTPase component of the Dom34-Hbs1 complex, a complex that recognizes stalled ribosomes and triggers the No-Go Decay (NGD) pathway. The Dom34-Hbs1 complex recognizes ribosomes stalled at the 3' end of an mRNA and engages stalled ribosomes by destabilizing mRNA in the mRNA channel. Following ribosome-binding, the Pelota-HBS1L complex promotes the disassembly of stalled ribosomes, followed by degradation of damaged mRNAs as part of the NGD pathway. The Dom34-Hbs1 complex is also involved in non-functional rRNA decay. The chain is Elongation factor 1 alpha-like protein from Saccharomyces cerevisiae (strain ATCC 204508 / S288c) (Baker's yeast).